The primary structure comprises 357 residues: UDP-N-acetylglucosamine--N-acetylmuramyl-(pentapeptide) pyrophosphoryl-undecaprenol N-acetylglucosamine transferase (357 aa).

Residues 15-17 (TGG), N124, R165, S194, and Q288 contribute to the UDP-N-acetyl-alpha-D-glucosamine site.

The protein belongs to the glycosyltransferase 28 family. MurG subfamily.

Its subcellular location is the cell inner membrane. The enzyme catalyses di-trans,octa-cis-undecaprenyl diphospho-N-acetyl-alpha-D-muramoyl-L-alanyl-D-glutamyl-meso-2,6-diaminopimeloyl-D-alanyl-D-alanine + UDP-N-acetyl-alpha-D-glucosamine = di-trans,octa-cis-undecaprenyl diphospho-[N-acetyl-alpha-D-glucosaminyl-(1-&gt;4)]-N-acetyl-alpha-D-muramoyl-L-alanyl-D-glutamyl-meso-2,6-diaminopimeloyl-D-alanyl-D-alanine + UDP + H(+). Its pathway is cell wall biogenesis; peptidoglycan biosynthesis. Cell wall formation. Catalyzes the transfer of a GlcNAc subunit on undecaprenyl-pyrophosphoryl-MurNAc-pentapeptide (lipid intermediate I) to form undecaprenyl-pyrophosphoryl-MurNAc-(pentapeptide)GlcNAc (lipid intermediate II). The protein is UDP-N-acetylglucosamine--N-acetylmuramyl-(pentapeptide) pyrophosphoryl-undecaprenol N-acetylglucosamine transferase of Trichormus variabilis (strain ATCC 29413 / PCC 7937) (Anabaena variabilis).